The following is a 420-amino-acid chain: MTRTAKLTIIPPGKPLSGRAMPPGSKSITNRALLLAGLAKGTSRLTGALKSDDTRYMADALRAMGVSIDEPDDTTFVVTGSGRLQPPKAPLFLGNAGTATRFLTAAAALVDGTVVVDGDEHMRKRPIGPLVEAMRTLGIDVTAETGCPPVTVKGTGRFQADRIRIDGGLSSQYVSALLMMAAGGDRPFDIELVGEDIGALGYIDLTTAAMKAFGAKVEKTSPVTWRVEPTGYRAADFIVEPDASAATYLWAAEVLTGGAIDLGVPSDAFSQPDARAYDMIARFPQLPAEIDGSQMQDAVPTLAVLAAFNETPVRFVGIANLRVKECDRIRALSSGLNRIRPGLAREEGDDLIVKSDPALVGKRLPAEIDSFADHRIAMSFALAGLKIDGITILDPDCVGKTFPAYWRTLAALGVTYQDKD.

3 residues coordinate 3-phosphoshikimate: lysine 26, serine 27, and arginine 31. A phosphoenolpyruvate-binding site is contributed by lysine 26. 2 residues coordinate phosphoenolpyruvate: glycine 97 and arginine 125. Serine 170, serine 171, glutamine 172, aspartate 297, asparagine 320, and lysine 324 together coordinate 3-phosphoshikimate. Glutamine 172 serves as a coordination point for phosphoenolpyruvate. Aspartate 297 acts as the Proton acceptor in catalysis. Phosphoenolpyruvate-binding residues include arginine 328, arginine 375, and lysine 400.

The protein belongs to the EPSP synthase family. In terms of assembly, monomer.

The protein localises to the cytoplasm. It catalyses the reaction 3-phosphoshikimate + phosphoenolpyruvate = 5-O-(1-carboxyvinyl)-3-phosphoshikimate + phosphate. It participates in metabolic intermediate biosynthesis; chorismate biosynthesis; chorismate from D-erythrose 4-phosphate and phosphoenolpyruvate: step 6/7. Functionally, catalyzes the transfer of the enolpyruvyl moiety of phosphoenolpyruvate (PEP) to the 5-hydroxyl of shikimate-3-phosphate (S3P) to produce enolpyruvyl shikimate-3-phosphate and inorganic phosphate. The protein is 3-phosphoshikimate 1-carboxyvinyltransferase of Rhizobium leguminosarum bv. trifolii (strain WSM2304).